Here is a 421-residue protein sequence, read N- to C-terminus: MLDLRFVRTNPDVVRQALINKGVSVDLDRILALDVERRQILAEVEQLKARRNQVSKQVGILKQQGQDVSAIIAEMGAIGDRIKELDDRERQVSDELQDLLYQLPNLPAPDVPVGPDETGNVEVKRWGEPRQFAFPVKPHWDLGVAMDGLDFERAAKVTGSRFSFIKGGLARLHRALVSFFIDYLTERGYREVLPPVIINTASYYGSGQFPKFKEDVFSLAGTDYHLASTAEVPLVNMHRDEILDEAVLPLRYVGYSGCFRSEAGAAGRDTRGLIRQHYFEKVEMVQFTRPEESEQALMEIVANAEGMLEQLNLPYRRMLMCTGDMGFGQYKKYDIEVWMPSYERYVEISSCSNMSDFQARRANIRYRPAGGKPEFVHTLNGSGLAVGRTLAAVMENYQNEDGSITVPEVLRPYTRCERIER.

229-231 (TAE) is a binding site for L-serine. Residue 260-262 (RSE) coordinates ATP. Glu283 is a binding site for L-serine. 347–350 (EISS) lines the ATP pocket. Ser382 lines the L-serine pocket.

It belongs to the class-II aminoacyl-tRNA synthetase family. Type-1 seryl-tRNA synthetase subfamily. As to quaternary structure, homodimer. The tRNA molecule binds across the dimer.

The protein localises to the cytoplasm. The enzyme catalyses tRNA(Ser) + L-serine + ATP = L-seryl-tRNA(Ser) + AMP + diphosphate + H(+). It carries out the reaction tRNA(Sec) + L-serine + ATP = L-seryl-tRNA(Sec) + AMP + diphosphate + H(+). Its pathway is aminoacyl-tRNA biosynthesis; selenocysteinyl-tRNA(Sec) biosynthesis; L-seryl-tRNA(Sec) from L-serine and tRNA(Sec): step 1/1. Catalyzes the attachment of serine to tRNA(Ser). Is also able to aminoacylate tRNA(Sec) with serine, to form the misacylated tRNA L-seryl-tRNA(Sec), which will be further converted into selenocysteinyl-tRNA(Sec). This is Serine--tRNA ligase from Symbiobacterium thermophilum (strain DSM 24528 / JCM 14929 / IAM 14863 / T).